A 338-amino-acid chain; its full sequence is MTPTDAKRPLQLNDQGQLRHFLSLDGLPRELLTEILDTADSFLEVGARAVKKVPLLRGKTVCNVFFENSTRTRTTFELAAKRLSADVITLNVSTSSTSKGETLTDTLRNLEAMAADMFVVRHADSGAAHFIAEHVSPDVAVINGGDGRHAHPTQGMLDMLTIRRHKGSFDNLSVAIVGDILHSRVARSNMLALRTLGCPDIRVIAPKTLLPEGIEQYGVRVFTDMNEGLRDVDVVIMLRLQRERMQGGLLPSEGEFYKLYGLTTQRLALARPDAIVMHPGPINRGVEIESAVADGPQSVILNQVTYGIAIRMAVLSMAMSGQTAQRQIDSESVSEEQQ.

Carbamoyl phosphate contacts are provided by Arg71 and Thr72. Lys99 serves as a coordination point for L-aspartate. Carbamoyl phosphate-binding residues include Arg121, His151, and Gln154. Residues Arg184 and Arg239 each coordinate L-aspartate. 2 residues coordinate carbamoyl phosphate: Gly280 and Pro281.

This sequence belongs to the aspartate/ornithine carbamoyltransferase superfamily. ATCase family. As to quaternary structure, heterododecamer (2C3:3R2) of six catalytic PyrB chains organized as two trimers (C3), and six regulatory PyrI chains organized as three dimers (R2).

The enzyme catalyses carbamoyl phosphate + L-aspartate = N-carbamoyl-L-aspartate + phosphate + H(+). Its pathway is pyrimidine metabolism; UMP biosynthesis via de novo pathway; (S)-dihydroorotate from bicarbonate: step 2/3. Functionally, catalyzes the condensation of carbamoyl phosphate and aspartate to form carbamoyl aspartate and inorganic phosphate, the committed step in the de novo pyrimidine nucleotide biosynthesis pathway. In Stutzerimonas stutzeri (strain A1501) (Pseudomonas stutzeri), this protein is Aspartate carbamoyltransferase catalytic subunit.